Reading from the N-terminus, the 438-residue chain is tRNA modification GTPase MnmE (438 aa).

(6S)-5-formyl-5,6,7,8-tetrahydrofolate is bound by residues R19, E76, and K115. The TrmE-type G domain occupies 211 to 363; it reads GYKVAIIGRP…LSKELESYLN (153 aa). GTP contacts are provided by residues 221–226, 240–246, and 265–268; these read NVGKSS, SETAGTT, and DTAG. Positions 225 and 246 each coordinate Mg(2+). K438 lines the (6S)-5-formyl-5,6,7,8-tetrahydrofolate pocket.

The protein belongs to the TRAFAC class TrmE-Era-EngA-EngB-Septin-like GTPase superfamily. TrmE GTPase family. Homodimer. Heterotetramer of two MnmE and two MnmG subunits. It depends on K(+) as a cofactor.

The protein localises to the cytoplasm. Functionally, exhibits a very high intrinsic GTPase hydrolysis rate. Involved in the addition of a carboxymethylaminomethyl (cmnm) group at the wobble position (U34) of certain tRNAs, forming tRNA-cmnm(5)s(2)U34. The sequence is that of tRNA modification GTPase MnmE from Campylobacter fetus subsp. fetus (strain 82-40).